The sequence spans 953 residues: Coatomer subunit beta (953 aa).

T2 is subject to N-acetylthreonine. HEAT repeat units follow at residues 96-131, 132-168, 240-276, 277-314, 316-353, and 396-433; these read HEMI…KEAE, LLEP…NFEN, SERA…SAPT, AIKA…HPAH, RVLQ…SRNV, and DMAA…RFDN. N6-acetyllysine is present on K494.

As to quaternary structure, oligomeric complex that consists of at least the alpha, beta, beta', gamma, delta, epsilon and zeta subunits. Interacts with SCYL1. Interacts with CAPN8. Interacts with COPG1. Interacts with ARF1 (myristoylated); this interaction is required for binding of COPB1 to Golgi membranes. Interacts (via trunk domain) with ARF1 (via switch I region); the interaction is direct. Interacts with KCNK2 (via N-terminus); this interaction increases the channel-mediated whole cell currents and promotes plasma membrane expression of KCNK2. Interacts with PRKCE. Interacts with STX17. Interacts with TMEM115. Interacts with TMEM41B. Post-translationally, proteolytically cleaved between Ser-528 and Ser-529 by CAPN8.

It is found in the cytoplasm. The protein resides in the golgi apparatus membrane. The protein localises to the cytoplasmic vesicle. Its subcellular location is the COPI-coated vesicle membrane. It localises to the cell membrane. It is found in the endoplasmic reticulum-Golgi intermediate compartment. The protein resides in the microsome membrane. Its function is as follows. The coatomer is a cytosolic protein complex that binds to dilysine motifs and reversibly associates with Golgi non-clathrin-coated vesicles, which further mediate biosynthetic protein transport from the ER, via the Golgi up to the trans Golgi network. Coatomer complex is required for budding from Golgi membranes, and is essential for the retrograde Golgi-to-ER transport of dilysine-tagged proteins. In mammals, the coatomer can only be recruited by membranes associated to ADP-ribosylation factors (ARFs), which are small GTP-binding proteins; the complex also influences the Golgi structural integrity, as well as the processing, activity, and endocytic recycling of LDL receptors. Involved in the Golgi disassembly and reassembly processes during cell cycle. Involved in autophagy by playing a role in early endosome function. Plays a role in organellar compartmentalization of secretory compartments including endoplasmic reticulum (ER)-Golgi intermediate compartment (ERGIC), Golgi, trans-Golgi network (TGN) and recycling endosomes, and in biosynthetic transport of CAV1. Plays a functional role in facilitating the transport of kappa-type opioid receptor mRNAs into axons and enhances translation of these proteins in the axonal compartment of dorsal root ganglion (DRG) cells. Required for limiting lipid storage in lipid droplets. Involved in lipid homeostasis by regulating the presence of perilipin family members PLIN2 and PLIN3 at the lipid droplet surface and promoting the association of adipocyte triglyceride lipase (PNPLA2) with the lipid droplet surface to mediate lipolysis. In Rattus norvegicus (Rat), this protein is Coatomer subunit beta (Copb1).